Consider the following 236-residue polypeptide: 2-C-methyl-D-erythritol 4-phosphate cytidylyltransferase (236 aa).

It belongs to the IspD/TarI cytidylyltransferase family. IspD subfamily. As to quaternary structure, homodimer.

It catalyses the reaction 2-C-methyl-D-erythritol 4-phosphate + CTP + H(+) = 4-CDP-2-C-methyl-D-erythritol + diphosphate. It functions in the pathway isoprenoid biosynthesis; isopentenyl diphosphate biosynthesis via DXP pathway; isopentenyl diphosphate from 1-deoxy-D-xylulose 5-phosphate: step 2/6. Catalyzes the formation of 4-diphosphocytidyl-2-C-methyl-D-erythritol from CTP and 2-C-methyl-D-erythritol 4-phosphate (MEP). The chain is 2-C-methyl-D-erythritol 4-phosphate cytidylyltransferase from Escherichia coli O45:K1 (strain S88 / ExPEC).